Reading from the N-terminus, the 264-residue chain is 3-methyl-2-oxobutanoate hydroxymethyltransferase (264 aa).

D43 and D82 together coordinate Mg(2+). Residues 43-44 (DS), D82, and K111 each bind 3-methyl-2-oxobutanoate. Position 113 (E113) interacts with Mg(2+). The active-site Proton acceptor is E180.

It belongs to the PanB family. As to quaternary structure, homodecamer; pentamer of dimers. The cofactor is Mg(2+).

It localises to the cytoplasm. The catalysed reaction is 3-methyl-2-oxobutanoate + (6R)-5,10-methylene-5,6,7,8-tetrahydrofolate + H2O = 2-dehydropantoate + (6S)-5,6,7,8-tetrahydrofolate. It participates in cofactor biosynthesis; (R)-pantothenate biosynthesis; (R)-pantoate from 3-methyl-2-oxobutanoate: step 1/2. Catalyzes the reversible reaction in which hydroxymethyl group from 5,10-methylenetetrahydrofolate is transferred onto alpha-ketoisovalerate to form ketopantoate. In Campylobacter fetus subsp. fetus (strain 82-40), this protein is 3-methyl-2-oxobutanoate hydroxymethyltransferase.